The sequence spans 196 residues: Molybdenum cofactor guanylyltransferase (196 aa).

GTP-binding positions include 14–16 (LAG), K27, D73, and D106. D106 provides a ligand contact to Mg(2+).

It belongs to the MobA family. Monomer. Mg(2+) serves as cofactor.

The protein localises to the cytoplasm. It carries out the reaction Mo-molybdopterin + GTP + H(+) = Mo-molybdopterin guanine dinucleotide + diphosphate. Transfers a GMP moiety from GTP to Mo-molybdopterin (Mo-MPT) cofactor (Moco or molybdenum cofactor) to form Mo-molybdopterin guanine dinucleotide (Mo-MGD) cofactor. The protein is Molybdenum cofactor guanylyltransferase of Acidiphilium cryptum (strain JF-5).